The chain runs to 338 residues: Methionine import ATP-binding protein MetN 2 (338 aa).

An ABC transporter domain is found at 2 to 242; it reads IEIEKVCVDF…PQHAFTQQLV (241 aa). Position 39 to 46 (39 to 46) interacts with ATP; sequence GTSGAGKS.

It belongs to the ABC transporter superfamily. Methionine importer (TC 3.A.1.24) family. As to quaternary structure, the complex is composed of two ATP-binding proteins (MetN), two transmembrane proteins (MetI) and a solute-binding protein (MetQ).

The protein localises to the cell inner membrane. The enzyme catalyses L-methionine(out) + ATP + H2O = L-methionine(in) + ADP + phosphate + H(+). The catalysed reaction is D-methionine(out) + ATP + H2O = D-methionine(in) + ADP + phosphate + H(+). Part of the ABC transporter complex MetNIQ involved in methionine import. Responsible for energy coupling to the transport system. This Salmonella typhimurium (strain LT2 / SGSC1412 / ATCC 700720) protein is Methionine import ATP-binding protein MetN 2.